The chain runs to 429 residues: 3-phosphoshikimate 1-carboxyvinyltransferase (429 aa).

The 3-phosphoshikimate site is built by Lys11, Ser12, and Arg16. Lys11 lines the phosphoenolpyruvate pocket. Gly82 and Arg110 together coordinate phosphoenolpyruvate. 3-phosphoshikimate-binding residues include Ser155, Gln157, Asp302, and Lys329. Residue Gln157 participates in phosphoenolpyruvate binding. The active-site Proton acceptor is the Asp302. The phosphoenolpyruvate site is built by Arg333 and Arg385.

Belongs to the EPSP synthase family. In terms of assembly, monomer.

Its subcellular location is the cytoplasm. The enzyme catalyses 3-phosphoshikimate + phosphoenolpyruvate = 5-O-(1-carboxyvinyl)-3-phosphoshikimate + phosphate. Its pathway is metabolic intermediate biosynthesis; chorismate biosynthesis; chorismate from D-erythrose 4-phosphate and phosphoenolpyruvate: step 6/7. In terms of biological role, catalyzes the transfer of the enolpyruvyl moiety of phosphoenolpyruvate (PEP) to the 5-hydroxyl of shikimate-3-phosphate (S3P) to produce enolpyruvyl shikimate-3-phosphate and inorganic phosphate. This Helicobacter pylori (strain P12) protein is 3-phosphoshikimate 1-carboxyvinyltransferase.